We begin with the raw amino-acid sequence, 1060 residues long: Protein transport protein Sec16B (1060 aa).

The interval 1–86 (MELWAPQRLP…GDWHQPVSGV (86 aa)) is disordered. The required for endoplasmic reticulum localization stretch occupies residues 34-224 (RPVPHSWHNG…PSLASESNLL (191 aa)). The span at 41-50 (HNGERFHQWQ) shows a compositional bias: basic and acidic residues. Over residues 51-60 (DNRGSPQPQQ) the composition is skewed to polar residues. Phosphoserine is present on residues Ser-55, Ser-143, Ser-167, Ser-188, and Ser-191. Disordered regions lie at residues 163 to 236 (ENQH…SSSY), 245 to 264 (APER…QADV), 711 to 733 (KVAG…GGTT), 770 to 796 (PSPQ…GTPR), and 834 to 1060 (PGEN…TQPC). Polar residues-rich tracts occupy residues 165 to 195 (QHSP…NSGQ) and 213 to 222 (NKPSLASESN). Residues 223-236 (LLQQRESGLSSSSY) show a composition bias toward low complexity. Ser-254 and Ser-258 each carry phosphoserine. A central conserved domain (CCD); required for localization to endoplasmic reticulum exit sites region spans residues 271-713 (APMKFYIPHV…LRRQLEQKVA (443 aa)). The span at 837–847 (NTVSQETSQPP) shows a compositional bias: polar residues. Thr-858 bears the Phosphothreonine mark. Ser-868, Ser-871, Ser-874, Ser-882, and Ser-883 each carry phosphoserine. 2 stretches are compositionally biased toward basic and acidic residues: residues 875–890 (AKED…DKNS) and 899–908 (KLGDGKEHTK). Residues 909-918 (SSGFGWFSWF) show a composition bias toward low complexity. Residues 930–941 (GDEDSSDSPDSE) show a composition bias toward acidic residues. Over residues 991-1001 (AAAGAGVGGLS) the composition is skewed to gly residues. Over residues 1031-1046 (NPSQVPQLPTATSLNR) the composition is skewed to polar residues.

This sequence belongs to the SEC16 family. As to quaternary structure, SEC16A and SEC16B are each present in multiple copies in a heteromeric complex. Interacts with TFG. Interacts with SEC13. As to expression, ubiquitous.

The protein resides in the endoplasmic reticulum membrane. It is found in the golgi apparatus membrane. Plays a role in the organization of the endoplasmic reticulum exit sites (ERES), also known as transitional endoplasmic reticulum (tER). Required for secretory cargo traffic from the endoplasmic reticulum to the Golgi apparatus. Involved in peroxisome biogenesis. Regulates the transport of peroxisomal biogenesis factors PEX3 and PEX16 from the ER to peroxisomes. This is Protein transport protein Sec16B (SEC16B) from Homo sapiens (Human).